Reading from the N-terminus, the 7913-residue chain is Nonribosomal peptide synthetase dtxS1 (7913 aa).

The tract at residues 263–662 (FEQRSRAHPN…GRNDNQVKIR (400 aa)) is adenylation 1. The 77-residue stretch at 789–865 (QPLSEVEKQV…NVAGQARRTT (77 aa)) folds into the Carrier 1 domain. Residue S826 is modified to O-(pantetheine 4'-phosphoryl)serine. The condensation 1 stretch occupies residues 903-1171 (QDAFPCTSLQ…ITTVPVRIRL (269 aa)). Positions 1332 to 1740 (LETQAHSRPD…GRKDAQVKIR (409 aa)) are adenylation 2. The Carrier 2 domain maps to 1865-1941 (QPRTKLERQL…NLAQATGTQG (77 aa)). The residue at position 1902 (S1902) is an O-(pantetheine 4'-phosphoryl)serine. A condensation 2 region spans residues 1965 to 2249 (PAQLSPIQRL…FSTIFPVRVS (285 aa)). Residues 2863 to 3255 (LAQPHEPAIC…ARKDAQIKIR (393 aa)) form an adenylation 3 region. One can recognise a Carrier 3 domain in the interval 3380–3456 (QPLSEAERKM…NVTHQAVAQL (77 aa)). At S3417 the chain carries O-(pantetheine 4'-phosphoryl)serine. The segment at 3496–3761 (DAFPCTPLQE…FATLPLRVRL (266 aa)) is condensation 3. The interval 3924-4321 (DRVRIHPNAP…GRKDDQVKLR (398 aa)) is adenylation 4. Over residues 4439–4450 (ELAQARTAQQGP) the composition is skewed to polar residues. Positions 4439–4459 (ELAQARTAQQGPKRQPASEAE) are disordered. The region spanning 4453–4529 (QPASEAERQM…EAATQAQMLG (77 aa)) is the Carrier 4 domain. At S4490 the chain carries O-(pantetheine 4'-phosphoryl)serine. A condensation 4 region spans residues 4545 to 4837 (QSFAQARLWF…VNMQCLRVKI (293 aa)). Residues 5006 to 5405 (FRQQVAACAD…RRMDAQVKIR (400 aa)) are adenylation 5. The region spanning 5933–6009 (QPTSKTQRQL…DMAEGLPLAK (77 aa)) is the Carrier 5 domain. S5970 carries the post-translational modification O-(pantetheine 4'-phosphoryl)serine. Residues 6023-6315 (VEQSFAQRRL…VNMQCIRIRV (293 aa)) form a condensation 5 region. The segment at 6481-6766 (FRQQALLNPD…IINAYGPTEN (286 aa)) is adenylation 6. The 77-residue stretch at 7394 to 7470 (QPTTDMEREM…DLACHLSPEE (77 aa)) folds into the Carrier 6 domain. An O-(pantetheine 4'-phosphoryl)serine modification is found at S7431. Positions 7501-7771 (EDVLPLTSFQ…CLNIVPIRVN (271 aa)) are condensation 6.

The protein belongs to the NRP synthetase family.

It participates in secondary metabolite biosynthesis. Functionally, nonribosomal peptide synthetase; part of the gene cluster that mediates the biosynthesis of destruxins, insecticidal cyclic hexadepsipeptides which induce flaccid paralysis and visceral muscle contraction in insects through targeting the calcium channels and vacuolar-type ATPases. The aldo-keto reductase dtxS3 converts alpha-ketoisocaproic acid from deaminated leucine into alpha-hydroxyisocaproic acid (HIC), which is the first substrate for destruxin assembly by dtxS1. L-aspartate decarboxylase dtxS4 converts aspartic acid into beta-alanine, the last substrate for the destruxin assembly line performed by dtxS1. The nonribosomal peptide synthetase dtxS1 synthesizes destruxins B and B2, whereas the cytochrome P450 monooxygenase dtxS2 is required to convert destruxin B into other destruxin derivatives, including destructins C, D, A and E. Destruxin E-diol (ED) is further produced in a non-enzymatic manner from destruxin E. Destruxins play an important role in virulence and escape from insect host immune defenses. The protein is Nonribosomal peptide synthetase dtxS1 of Metarhizium robertsii (strain ARSEF 23 / ATCC MYA-3075) (Metarhizium anisopliae (strain ARSEF 23)).